The primary structure comprises 415 residues: Membrane-bound ghrelin O-acyltransferase mboat4 (415 aa).

Over 1 to 6 (MIDLLW) the chain is Lumenal. A helical membrane pass occupies residues 7 to 28 (ISSDGHPQLFYQFINIPFAFLF). The Cytoplasmic segment spans residues 29–42 (HCLSSQGHLSIINR). The helical transmembrane segment at 43 to 58 (YVYLAMGGFMLAIATM) threads the bilayer. Over 59–61 (GPY) the chain is Lumenal. A helical membrane pass occupies residues 62–78 (SSLLFLSAIKLLLLIHY). Residues 79–84 (IHPMHL) are Cytoplasmic-facing. Residues 85–103 (HRWILGLQMCWQTCWHLYV) traverse the membrane as a helical segment. Residues 104–122 (QYQIYWLQEAPDSRLLLAI) lie on the Lumenal side of the membrane. Residues 123–138 (SALMLMTQRISSLSLD) form a helical membrane-spanning segment. At 139–193 (FQEGTISNQSILIPFLTYSLYFPALLGGPLCSFNAFVQSVERQHTSMTSYLGNLT) the chain is on the cytoplasmic side. Residues 194-214 (SKISQVIVLVWIKQLFSELLK) traverse the membrane as a helical segment. Topologically, residues 215 to 227 (SATFNIDSVCLDV) are lumenal. Residues 228–247 (LWIWIFSLTLRLNYYAHWKM) traverse the membrane as a helical segment. Residues 248–312 (SECVNNAAGL…RKIVFNRTSR (65 aa)) lie on the Cytoplasmic side of the membrane. Active-site residues include Asn295 and His326. The helical transmembrane segment at 313-326 (SPLFMTFGFSALWH) threads the bilayer. At 327–328 (GL) the chain is on the lumenal side. The helical transmembrane segment at 329–345 (HPGQILGFLIWAVTVQA) threads the bilayer. The Cytoplasmic portion of the chain corresponds to 346 to 364 (DYKLHRFSHPKLNSLWRKR). A helical transmembrane segment spans residues 365–385 (LYVCVNWAFTQLTVACVVVCV). Topologically, residues 386–394 (ELQSLASVK) are lumenal. A helical membrane pass occupies residues 395 to 415 (LLWSSCIAVFPLLSALILIIL).

The protein belongs to the membrane-bound acyltransferase family. Monomer. Not glycosylated.

It is found in the endoplasmic reticulum membrane. The enzyme catalyses octanoyl-CoA + L-seryl-[protein] = O-octanoyl-L-seryl-[protein] + CoA. The catalysed reaction is decanoyl-CoA + L-seryl-[protein] = O-decanoyl-L-seryl-[protein] + CoA. It catalyses the reaction L-seryl-[protein] + acetyl-CoA = O-acetyl-L-seryl-[protein] + CoA. It carries out the reaction L-seryl-[protein] + butanoyl-CoA = O-butanoyl-L-seryl-[protein] + CoA. The enzyme catalyses pentanoyl-CoA + L-seryl-[protein] = O-pentanoyl-L-seryl-[protein] + CoA. The catalysed reaction is hexanoyl-CoA + L-seryl-[protein] = O-hexanoyl-L-seryl-[protein] + CoA. It catalyses the reaction heptanoyl-CoA + L-seryl-[protein] = O-heptanoyl-L-seryl-[protein] + CoA. It carries out the reaction nonanoyl-CoA + L-seryl-[protein] = O-nonanoyl-L-seryl-[protein] + CoA. The enzyme catalyses L-seryl-[protein] + dodecanoyl-CoA = O-dodecanoyl-L-seryl-[protein] + CoA. The catalysed reaction is L-seryl-[protein] + tetradecanoyl-CoA = O-tetradecanoyl-L-seryl-[protein] + CoA. It catalyses the reaction a fatty acyl-CoA + L-seryl-[protein] = O-fatty acyl-L-seryl-[protein] + CoA. Catalyzes ghrelin acylation at 'Ser-3' using preferentially octanoyl-CoA, hexanoyl-CoA and decanoyl-CoA as acyl-CoA donors leading to ghrelin activity. In vitro uses also acyl-CoA donors of different lengths from short-chain (C2) to long-chain fatty acids (C16) knowing that acyl-CoA donors from butanoyl-CoA (C4) to dodecanoyl-CoA (C12) are more efficient compared to longer acyl-CoA donors, such as myristoyl-CoA (C14) and palmitoyl-CoA (C16) that are not efficient. This chain is Membrane-bound ghrelin O-acyltransferase mboat4, found in Danio rerio (Zebrafish).